A 130-amino-acid chain; its full sequence is uncharacterized protein (130 aa).

The N-terminal stretch at 1–20 (MFNCLTKLVILVCLKYVAKA) is a signal peptide.

This is an uncharacterized protein from Saccharomyces cerevisiae (strain ATCC 204508 / S288c) (Baker's yeast).